We begin with the raw amino-acid sequence, 2004 residues long: MEKYFGEKQERFSFRKLSVGLVSATISSLFFMSVLASSSVDAQETAGVHYKYVADSELSSEEKKQLVYDIPTYVENDDETYYLVYKLNSQNQLAELPNTGSKNERQALVAGASLAAMGILIFAVSKKKVKNKTVLHLVLVAGIGNGVLVSVHALENHLLLNYNTDYELTSGEKLPLPKEISGYTYIGYIKEGKTTSESEVSNQKSSVATPTKQQKVDYNVTPNFVDHPSTVQAIQEQTPVSSTKPTEVQVVEKPFSTELINPRKEEKQSSDSQEQLAEHKNLETKKEEKISPKEKTGVNTLNPQDEVLSGQLNKPELLYREETMETKIDFQEEIQENPDLAEGTVRVKQEGKLGKKVEIVRIFSVNKEEVSREIVSTSTTAPSPRIVEKGTKKTQVIKEQPETGVEHKDVQSGAIVEPAIQPELPEAVVSDKGEPEVQPTLPEAVVTDKGETEVQPESPDTVVSDKGEPEQVAPLPEYKGNIEQVKPETPVEKTKEQGPEKTEEVPVKPTEETPVNPNEGTTEGTSIQEAENPVQPAEESTTNSEKVSPDTSSKNTGEVSSNPSDSTTSVGESNKPEHNDSKNENSEKTVEEVPVNPNEGTVEGTSNQETEKPVQPAEETQTNSGKIANENTGEVSNKPSDSKPPVEESNQPEKNGTATKPENSGNTTSENGQTEPEPSNGNSTEDVSTESNTSNSNGNEEIKQENELDPDKKVEEPEKTLELRNVSDLELYSLSNGTYKQHISLEQVPSNPNSYFVKVKSSSFKDVYLPVASISEERKNDKILYKITAKVEKLQQEIESRYKDNFTFYLAKKGTEETTNFTSFSNLVKAINQNPSGTYHLAASLNANEVELGPDERSYIKDTFTGRLIGEKDGKNYAIYNLKKPLFENLSGATVEKLSLKNVAISGKDDIGSLANEAQNNTKIKQVHVDGVLAGERGIGGLLAKAEQSSITESSFKGRIINTYETTAAYNIGGMVGHLTGDKALLTKSKATVAISSNTNTSDQTVGGLAGLVDRDAQIQDSYAEGDINNVKHFGRVAGVAGNLWDRTSGDVRHAGSLTNVLSDVNVTNGNAITGYHYNEMKVKDTFSSKANRVYNVTLVKDEVVSKESFEERGTMLDASQIASKKAEINPLILPTVEPLSTSGKKDSDFSKVAYYQAKRNLTYKNIEKLLPFYNKATIVKYGNLVNENSLLYQKELLSAVMMKDNQVITDIVSNKQTANKLLLHYKDDLSEKLDLKYQNDFAKLAEYSLGNTGLLYTPNQFLYDQTSIIKQVLPDLQKVDYHSEAIRKTLGISPNVKQTELYLEDQFAKTKQQLEDSLKKLLSADAGLASANPVTEGYLVDKIKRNKEALLLGLTYLERWYNFSYGQVNVKDLVLYHLDFFGKGNASPLDTLIELGKSGFNNLLAKNNVDTYGISLASQHGTTDLFSTLEHYRKVFLPNTSNNDWFKSETKAYIVEEKSTIEEVKTKQGLAGTKYSIGVYDRITSATWKYRNMVLPLLTLPERSVFVISTMSSLGFGAYDRYRSSDHKAGKALNDFVEENARETAKRQRDHYDYWYRILDDNAREKLYRNILLYDAYKFGDDNTVGKATEVADFDNPNPAMQHFFGPVGNKVGHNQHGAYATGDAVYYMGYRMLDKDGAITYTHEMTHDSDQDIYLGGYGRRSGLGPEFFAKGLLQAPDHPDDATITINSILKHSKSDSTESRRLQVLDPTTRFNNADDLKQYVHNMFDVVYMLEYLEGNSILKLDTNQKQQLLRKVTNEYHPDPDGNKVYATNVVRNLTVEEVERLRSFNDLIDNNILSSREYASGKYERNGYFTIKLFAPIYAALSNDIGTPGDLMGRRIAYELLAAKGFKDGMVPYISNQYEEEAKQKGKTINLYGKTRGLVTDDLVLEKVFNNQYHTWSEFKKAMYQERQDQFDRLNKVTFNDTTQPWQTFAKKTTSSVDELQKLMDVAVRKDAEHNYYHWNNYNPDIDSEVHKLKRAIFKAYLDQTNDFRSSIFENKK.

The N-terminal stretch at 1–42 is a signal peptide; the sequence is MEKYFGEKQERFSFRKLSVGLVSATISSLFFMSVLASSSVDA. Positions 43-99 are excised as a propeptide; the sequence is QETAGVHYKYVADSELSSEEKKQLVYDIPTYVENDDETYYLVYKLNSQNQLAELPNT. Positions 96-100 match the LPXTG sorting signal motif; sequence LPNTG. Residue Thr99 is modified to Pentaglycyl murein peptidoglycan amidated threonine. Transmembrane regions (helical) follow at residues 106–125 and 132–154; these read QALVAGASLAAMGILIFAVS and KTVLHLVLVAGIGNGVLVSVHAL. Over 155 to 2004 the chain is Extracellular; it reads ENHLLLNYNT…FRSSIFENKK (1850 aa). Disordered stretches follow at residues 194–213, 235–305, 373–394, and 422–720; these read TTSESEVSNQKSSVATPTKQ, QEQT…NPQD, EIVSTSTTAPSPRIVEKGTKKT, and PELP…PEKT. Polar residues-rich tracts occupy residues 197–213 and 235–246; these read ESEVSNQKSSVATPTKQ and QEQTPVSSTKPT. Over residues 276–296 the composition is skewed to basic and acidic residues; it reads LAEHKNLETKKEEKISPKEKT. Residues 314-393 enclose the G5 domain; sequence KPELLYREET…PRIVEKGTKK (80 aa). A run of 3 repeats spans residues 419-435, 436-452, and 453-469. A 3 X 17 AA approximate tandem repeats region spans residues 419-469; that stretch reads AIQPELPEAVVSDKGEPEVQPTLPEAVVTDKGETEVQPESPDTVVSDKGEP. Over residues 485–511 the composition is skewed to basic and acidic residues; that stretch reads VKPETPVEKTKEQGPEKTEEVPVKPTE. Composition is skewed to polar residues over residues 516–529 and 538–572; these read NPNEGTTEGTSIQE and EESTTNSEKVSPDTSSKNTGEVSSNPSDSTTSVGE. Over residues 574-591 the composition is skewed to basic and acidic residues; that stretch reads NKPEHNDSKNENSEKTVE. 2 stretches are compositionally biased toward polar residues: residues 618–639 and 648–681; these read EETQTNSGKIANENTGEVSNKP and ESNQPEKNGTATKPENSGNTTSENGQTEPEPSNG. Low complexity predominate over residues 682 to 699; sequence NSTEDVSTESNTSNSNGN. A compositionally biased stretch (basic and acidic residues) spans 700–720; the sequence is EEIKQENELDPDKKVEEPEKT. His1645 contacts Zn(2+). Glu1646 is an active-site residue. Zn(2+) is bound by residues His1649 and Glu1669.

Belongs to the peptidase M26 family. It depends on Zn(2+) as a cofactor. Post-translationally, the Gram-positive cell-wall anchor motif LPXTG is located in the N-terminal part, in contrast to such motifs in other known streptococcal and staphylococcal proteins. The protease could be cleaved by the sortase and anchored in the membrane via the two potential N-terminal transmembrane domains, whereas the propeptide located prior to the LPXTG motif would remain attached to the cell wall peptidoglycan by an amide bond.

It localises to the secreted. Its subcellular location is the cell wall. The protein resides in the membrane. The enzyme catalyses Cleavage of Pro-|-Thr bond in the hinge region of the heavy chain of human IgA.. Zinc metalloproteinase which cleaves human immunoglobulin A1 (IgA1) in the hinge region, rendering it less efficient in coating the surface of colonizing or invading pneumococci. Strongly contributes to virulence in mice. May be responsible for pneumococcal infection and is potentially involved in distinct stages of pneumococcal disease. This is Immunoglobulin A1 protease (iga) from Streptococcus pneumoniae serotype 4 (strain ATCC BAA-334 / TIGR4).